The sequence spans 983 residues: ABC transporter A family member 2 (983 aa).

6 consecutive transmembrane segments (helical) span residues 33–53 (FLQL…QAAM), 221–241 (IVAL…FGFV), 279–299 (ILTA…QFDF), 305–325 (FPVV…LAFM), 339–359 (VGFF…SGFP), and 416–436 (VLTI…WFVL). The region spanning 518–763 (VQIRGLAKTY…FGTGFIANIS (246 aa)) is the ABC transporter domain. 564–571 (GPNGAGKT) is a binding site for ATP. A disordered region spans residues 963 to 983 (RSGSTSSRRFSRSGSSRRFSS).

This sequence belongs to the ABC transporter superfamily. ABCA family. CPR flippase (TC 3.A.1.211) subfamily.

It localises to the membrane. The protein is ABC transporter A family member 2 (ABCA2) of Arabidopsis thaliana (Mouse-ear cress).